We begin with the raw amino-acid sequence, 961 residues long: Phosphofurin acidic cluster sorting protein 1 (961 aa).

The span at 1-19 (MAERGGAGGGPGGSGGGSS) shows a compositional bias: gly residues. Disordered stretches follow at residues 1 to 70 (MAER…SSST) and 76 to 95 (VAVA…RTPA). Alanine 2 bears the N-acetylalanine mark. Positions 20–34 (QRGSGVAQSPQQQPQ) are enriched in low complexity. Residue serine 28 is modified to Phosphoserine. The segment covering 35–46 (QQPPQPQQPTPP) has biased composition (pro residues). Residue threonine 44 is modified to Phosphothreonine. A compositionally biased stretch (low complexity) spans 51–70 (ATSSSSSTSAAAASSSSSST). Tyrosine 249 is modified (phosphotyrosine). Basic and acidic residues predominate over residues 260-271 (GIKSKLSDRSPD). 2 disordered regions span residues 260–297 (GIKS…LHGQ) and 375–426 (NPSD…GKDT). The span at 274–291 (NYSEEEEESFSSEQEGSD) shows a compositional bias: acidic residues. Positions 351–375 (HVSREQIREVEEDLDELYDSLEMYN) form a coiled coil. A phosphoserine mark is found at serine 377 and serine 379. The segment covering 404 to 426 (MSQSSSQTEIGSLNSKGSLGKDT) has biased composition (polar residues). Serine 428 and serine 493 each carry phosphoserine. 2 disordered regions span residues 475 to 540 (EKVK…HSTQ) and 758 to 802 (SPST…SMSS). Position 502 is a phosphothreonine (threonine 502). Serine 517, serine 526, serine 527, serine 529, and serine 532 each carry phosphoserine. Low complexity predominate over residues 768-802 (SPVVSLTVPSTSPPSSSGLSRDATATPPSSPSMSS).

Belongs to the PACS family. As to quaternary structure, associates with AP-1 and AP-3 but not with AP-2 complexes. Interacts with FURIN. Forms a ternary complex with FURIN and AP-1. Interacts with PKD2 (via acidic region). Interacts with SORL1. Interacts with WDR37.

The protein localises to the golgi apparatus. Its subcellular location is the trans-Golgi network. Coat protein that is involved in the localization of trans-Golgi network (TGN) membrane proteins that contain acidic cluster sorting motifs. Controls the endosome-to-Golgi trafficking of furin and mannose-6-phosphate receptor by connecting the acidic-cluster-containing cytoplasmic domain of these molecules with the adapter-protein complex-1 (AP-1) of endosomal clathrin-coated membrane pits. Required for normal ER Ca2+ handling in lymphocytes. Together with WDR37, it plays an essential role in lymphocyte development, quiescence and survival. Required for stabilizing peripheral lymphocyte populations. The chain is Phosphofurin acidic cluster sorting protein 1 (Pacs1) from Mus musculus (Mouse).